The chain runs to 903 residues: Glutamate receptor ionotropic, NMDA 1 (903 aa).

An N-terminal signal peptide occupies residues 1-20 (MGTMRLFLLAVLFLFSFARA). Residues 21–557 (GCDPKIVNIG…TLDSFMQPFQ (537 aa)) are Extracellular-facing. N-linked (GlcNAc...) asparagine glycosylation is found at N61, N203, N276, N300, N350, N368, N440, N469, and N489. A disulfide bridge links C79 with C308. 2 cysteine pairs are disulfide-bonded: C420-C452 and C436-C453. The glycine site is built by P514, T516, and R521. A helical transmembrane segment spans residues 558-578 (STLWLLVGLSVHVVAVMLYLL). The Cytoplasmic portion of the chain corresponds to 579–600 (DRFSPFGRFKVNSEEEEEDALT). The pore-forming stretch occupies residues 601–620 (LSSAMWFSWGVLLNSGIGEG). Positions 601-622 (LSSAMWFSWGVLLNSGIGEGAP) form an intramembrane region, discontinuously helical. The Cytoplasmic segment spans residues 623-628 (RSFSAR). The helical transmembrane segment at 629–645 (ILGMVWAGFAMIIVASY) threads the bilayer. Residues 646–810 (TANLAAFLVL…NAPATLTFEN (165 aa)) lie on the Extracellular side of the membrane. Glycine is bound by residues S686 and D730. A disulfide bridge connects residues C742 and C796. N769 is a glycosylation site (N-linked (GlcNAc...) asparagine). The chain crosses the membrane as a helical span at residues 811 to 831 (MAGVFMLVAGGIVAGIFLIFI). The Cytoplasmic segment spans residues 832–903 (EIAYKRHKDA…SSKDTVNVVV (72 aa)).

The protein belongs to the glutamate-gated ion channel (TC 1.A.10.1) family. NR1/GRIN1 subfamily. In terms of assembly, heterotetramer; the NMDAR subunits are modular and harbor tiered domains that function in concert to regulate opening and closing of the cation-selective ion channel pore. Forms heterotetrameric channels composed of two GluN1/zeta subunits (GRIN1), and two identical GluN2/epsilon subunits (GRIN2A, GRIN2B, GRIN2C or GRIN2D) or GluN3 subunits (GRIN3A or GRIN3B) (in vitro). Does not form functional channels by itself. Can also form heterotetrameric channels that contain at least two GluN1 subunits and at least two different GluN2 subunits (or a combination of one GluN2 and one GluN3 subunits) (in vitro). In vivo, the subunit composition may vary in function of the expression levels of the different subunits.

It localises to the cell membrane. It is found in the postsynaptic cell membrane. Its subcellular location is the postsynaptic density membrane. The protein resides in the synaptic cell membrane. The enzyme catalyses Ca(2+)(in) = Ca(2+)(out). It carries out the reaction Na(+)(in) = Na(+)(out). The catalysed reaction is K(+)(in) = K(+)(out). NMDA glutamate receptor activity is modulated by zinc ions. The NMDA glutamate receptor activity of the heterotetramer with grin2b is stimulated by micromolar levels of Zn(2+). The NMDA glutamate receptor activity of the heterotetramer with grin2a is inhibited by nanomolar levels of Zn(2+). Its function is as follows. Component of N-methyl-D-aspartate (NMDA) receptors (NMDARs) that function as heterotetrameric, ligand-gated cation channels with high calcium permeability and voltage-dependent block by Mg(2+). NMDARs participate in synaptic plasticity. Channel activation requires binding of the neurotransmitter L-glutamate to the GluN2 subunit, glycine binding to the GluN1 subunit, plus membrane depolarization to eliminate channel inhibition by Mg(2+). NMDARs mediate simultaneously the potasium efflux and the influx of calcium and sodium. Each GluN2 or GluN3 subunit confers differential attributes to channel properties, including activation, deactivation and desensitization kinetics, pH sensitivity, Ca2(+) permeability, and binding to allosteric modulators. In Xenopus laevis (African clawed frog), this protein is Glutamate receptor ionotropic, NMDA 1.